The sequence spans 343 residues: MTITPQEALQRTIEHREIFHDEMLHLMRLIMRGDLSPVMAAAIITGLRVKKETIGEIAAAATVMREFANHVEVQDNSNFVDIVGTGGDGSHTFNISTASMFVTAAAGAKVAKHGNRGVSSKSGSADVLEALGVNIDLQSDQVAASIAETGMGFMFAPNHHPAMKNIAAVRRELGVRTIFNILGPLTNPAGAPNQLMGVFHADLVGIQVRVMQRLGAQHVLVVYGKDGMDEVSLGAATLVGELRDGKVHEYEIHPEDFGLQMVSNRTLKVENADESRTMLLGALDNQPGVAREIVTLNAGTALYAANVAESIADGIQLAREAIASGKARAKVDELVRFTQQFKR.

5-phospho-alpha-D-ribose 1-diphosphate contacts are provided by residues G84, 87 to 88 (GD), T92, 94 to 97 (NIST), 112 to 120 (KHGNRGVSS), and S124. Position 84 (G84) interacts with anthranilate. S96 serves as a coordination point for Mg(2+). Residue N115 participates in anthranilate binding. An anthranilate-binding site is contributed by R170. Residues D229 and E230 each coordinate Mg(2+).

The protein belongs to the anthranilate phosphoribosyltransferase family. As to quaternary structure, homodimer. It depends on Mg(2+) as a cofactor.

The enzyme catalyses N-(5-phospho-beta-D-ribosyl)anthranilate + diphosphate = 5-phospho-alpha-D-ribose 1-diphosphate + anthranilate. The protein operates within amino-acid biosynthesis; L-tryptophan biosynthesis; L-tryptophan from chorismate: step 2/5. Catalyzes the transfer of the phosphoribosyl group of 5-phosphorylribose-1-pyrophosphate (PRPP) to anthranilate to yield N-(5'-phosphoribosyl)-anthranilate (PRA). This Burkholderia cenocepacia (strain ATCC BAA-245 / DSM 16553 / LMG 16656 / NCTC 13227 / J2315 / CF5610) (Burkholderia cepacia (strain J2315)) protein is Anthranilate phosphoribosyltransferase.